A 286-amino-acid polypeptide reads, in one-letter code: Beta-lactamase TEM-12 (286 aa).

The first 23 residues, 1–23 (MSIQHFRVALIPFFAAFCLPVFA), serve as a signal peptide directing secretion. S68 acts as the Acyl-ester intermediate in catalysis. Residues C75 and C121 are joined by a disulfide bond. E166 functions as the Proton acceptor in the catalytic mechanism. Residue 232-234 (KSG) coordinates substrate.

This sequence belongs to the class-A beta-lactamase family.

It catalyses the reaction a beta-lactam + H2O = a substituted beta-amino acid. Its function is as follows. TEM-type are the most prevalent beta-lactamases in enterobacteria; they hydrolyze the beta-lactam bond in susceptible beta-lactam antibiotics, thus conferring resistance to penicillins and cephalosporins such as ceftazidime. In Klebsiella oxytoca, this protein is Beta-lactamase TEM-12 (blaT-12b).